The following is a 150-amino-acid chain: Ribosome maturation factor RimP (150 aa).

Belongs to the RimP family.

Its subcellular location is the cytoplasm. Functionally, required for maturation of 30S ribosomal subunits. This Thermotoga petrophila (strain ATCC BAA-488 / DSM 13995 / JCM 10881 / RKU-1) protein is Ribosome maturation factor RimP.